Reading from the N-terminus, the 346-residue chain is Phosphoribosylformylglycinamidine cyclo-ligase (346 aa).

It belongs to the AIR synthase family.

Its subcellular location is the cytoplasm. It carries out the reaction 2-formamido-N(1)-(5-O-phospho-beta-D-ribosyl)acetamidine + ATP = 5-amino-1-(5-phospho-beta-D-ribosyl)imidazole + ADP + phosphate + H(+). It functions in the pathway purine metabolism; IMP biosynthesis via de novo pathway; 5-amino-1-(5-phospho-D-ribosyl)imidazole from N(2)-formyl-N(1)-(5-phospho-D-ribosyl)glycinamide: step 2/2. This Photorhabdus laumondii subsp. laumondii (strain DSM 15139 / CIP 105565 / TT01) (Photorhabdus luminescens subsp. laumondii) protein is Phosphoribosylformylglycinamidine cyclo-ligase.